A 710-amino-acid polypeptide reads, in one-letter code: Probable inactive DNA (cytosine-5)-methyltransferase DRM3 (710 aa).

The tract at residues 1-21 is disordered; sequence MADMRRRNGSGGSSNHERNEQ. One can recognise a UBA 1 domain in the interval 52–92; sequence SGSNVKSLLIEMGFCPTLVQKAIDENGQDDFELLLEILTKS. Acidic residues predominate over residues 167 to 184; the sequence is ESEDSLDGAEINEEDEDV. The segment at 167-192 is disordered; it reads ESEDSLDGAEINEEDEDVTPVTARGP. Positions 198-242 constitute a UBA 2 domain; the sequence is QLFETMDKTLRLLEMGFSNDEISMAIEKIGTKGQISVLAESIVTG. The disordered stretch occupies residues 282-360; it reads AQKEDGGGGS…MGDSSSFMET (79 aa). The span at 339-350 shows a compositional bias: basic and acidic residues; it reads YDDRGKRLRPED. Residues 379–710 form the SAM-dependent MTase DRM-type domain; the sequence is QPRLSQSLGP…RVTKRVRDMM (332 aa).

The protein belongs to the class I-like SAM-binding methyltransferase superfamily. DRM-methyltransferase family. As to quaternary structure, interacts with Pol V.

Its subcellular location is the nucleus. Its function is as follows. Catalytically inactive DNA methyltransferase that acts as regulatory factor for DRM2-mediated DNA methylation. Required for maintenance of non-CpG DNA methylation. Required for normal establishment and maintenance of RNA-directed DNA methylation (RdDM) and accumulation of specific repeat-associated small interfering RNAs (siRNAs). Required for nucleolus organizer region (NOR) nuclear organization during interphase. Acts downstream of the production of siRNAs. May promote RNA polymerase V (Pol V) transcriptional elongation or assist in the stabilization of Pol V transcripts. This is Probable inactive DNA (cytosine-5)-methyltransferase DRM3 from Arabidopsis thaliana (Mouse-ear cress).